The chain runs to 97 residues: uncharacterized protein (97 aa).

Residues 2 to 95 (IRHLVLFKLN…EFATWVIADY (94 aa)) form the Stress-response A/B barrel domain.

This is an uncharacterized protein from Streptomyces coelicolor (strain ATCC BAA-471 / A3(2) / M145).